The following is a 439-amino-acid chain: Enolase 1 (439 aa).

The substrate site is built by His-160 and Glu-169. Glu-212 serves as the catalytic Proton donor. 3 residues coordinate Mg(2+): Asp-247, Glu-296, and Asp-323. Residues Glu-296 and Asp-323 each coordinate substrate. Catalysis depends on Lys-348, which acts as the Proton acceptor. Residues 375 to 378 (SHRS) and Lys-399 contribute to the substrate site.

It belongs to the enolase family. As to quaternary structure, homodimer. Mg(2+) serves as cofactor.

It localises to the cytoplasm. The enzyme catalyses (2R)-2-phosphoglycerate = phosphoenolpyruvate + H2O. The protein operates within carbohydrate degradation; glycolysis; pyruvate from D-glyceraldehyde 3-phosphate: step 4/5. The polypeptide is Enolase 1 (ENO1) (Debaryomyces hansenii (strain ATCC 36239 / CBS 767 / BCRC 21394 / JCM 1990 / NBRC 0083 / IGC 2968) (Yeast)).